The sequence spans 317 residues: Protein CbxX, chromosomal (317 aa).

The segment at 1–21 is disordered; sequence MSAPETTAPLQPPAAPAASLP. 85–92 is an ATP binding site; sequence GNPGTGKT.

The protein belongs to the CbxX/CfxQ family.

Seems to be necessary for the expression of RuBisCO. The polypeptide is Protein CbxX, chromosomal (cbxXC) (Cupriavidus necator (strain ATCC 17699 / DSM 428 / KCTC 22496 / NCIMB 10442 / H16 / Stanier 337) (Ralstonia eutropha)).